A 152-amino-acid polypeptide reads, in one-letter code: Ribosome maturation factor RimP (152 aa).

It belongs to the RimP family.

The protein resides in the cytoplasm. In terms of biological role, required for maturation of 30S ribosomal subunits. In Aeromonas hydrophila subsp. hydrophila (strain ATCC 7966 / DSM 30187 / BCRC 13018 / CCUG 14551 / JCM 1027 / KCTC 2358 / NCIMB 9240 / NCTC 8049), this protein is Ribosome maturation factor RimP.